Consider the following 320-residue polypeptide: MAAAALQLRQSLCPGPRVLRTFSSVASPAAPRAGPRTASRSERPMRRKALPPRTEKMDTDQDWPSVYPTAAPFKPSAVPLPVRMGYPVKKGVPMAKEGNLELLKIPNFLHLTPVAIKRHCAALKDFCTEWPAALDSDEKCEEHFPVEIDTADYVSSGPSIRNPKARAVTLRVKLSSLNLDNHAKKKLIKLVGERYCKATDVLTITTDRCPLKRQNYDYAVYLLTVLYHESWKTEDWENSKTEEDMDEYVWAKSSSENSVLQTLLQMRAAESSVAPSREELLGTKEVEDYQKCVVRLKNEGENEASLAQYKESVKRLLNLA.

The tract at residues Ser-24–Trp-63 is disordered.

This sequence belongs to the mitochondrion-specific ribosomal protein mS35 family. In terms of assembly, component of the mitochondrial ribosome small subunit (28S) which comprises a 12S rRNA and about 30 distinct proteins.

It is found in the mitochondrion. The polypeptide is Small ribosomal subunit protein mS35 (Mus musculus (Mouse)).